Here is a 367-residue protein sequence, read N- to C-terminus: Glutamate 5-kinase (367 aa).

Lysine 10 contributes to the ATP binding site. Serine 50, aspartate 137, and asparagine 149 together coordinate substrate. Residues 169 to 170 and 211 to 217 contribute to the ATP site; these read TD and TGGMSTK. The region spanning 275 to 353 is the PUA domain; sequence AGEITVDEGA…QQIDAILGYE (79 aa).

Belongs to the glutamate 5-kinase family.

The protein localises to the cytoplasm. The catalysed reaction is L-glutamate + ATP = L-glutamyl 5-phosphate + ADP. The protein operates within amino-acid biosynthesis; L-proline biosynthesis; L-glutamate 5-semialdehyde from L-glutamate: step 1/2. Catalyzes the transfer of a phosphate group to glutamate to form L-glutamate 5-phosphate. The polypeptide is Glutamate 5-kinase (Salmonella paratyphi A (strain ATCC 9150 / SARB42)).